We begin with the raw amino-acid sequence, 230 residues long: Preflagellin peptidase (230 aa).

Residue Met-1 is a topological domain, cytoplasmic. The chain crosses the membrane as a helical span at residues 2–18 (IEYIIGALGLIIASVQD). The Extracellular portion of the chain corresponds to 19–23 (FRSRE). The chain crosses the membrane as a helical span at residues 24–46 (IEDYIWIFLAVFGVLFAIYSSIT). Over 47-49 (LLD) the chain is Cytoplasmic. Residues 50-72 (YSILINSISGFVICFILGYMMFL) traverse the membrane as a helical segment. At 73 to 78 (SGIGGG) the chain is on the extracellular side. The helical transmembrane segment at 79-89 (DGKMLIGLGAL) threads the bilayer. The Cytoplasmic portion of the chain corresponds to 90 to 110 (VPKFQMPIYTSLGTLLNLNYV). Residues 111 to 139 (PTFPIMVFINGIFFMVFLPFVILFRNILN) form a helical membrane-spanning segment. Residues 140–204 (GARPKTGKEF…EEIWVTPQIP (65 aa)) are Extracellular-facing. Residues 205 to 216 (LIIPITLSYLVT) form a helical membrane-spanning segment. The Cytoplasmic portion of the chain corresponds to 217 to 230 (PIIGDRILDFLIPF).

The protein belongs to the peptidase A24 family. Archaeal preflagellin peptidase subfamily.

Its subcellular location is the cell membrane. It catalyses the reaction Cleaves the signal peptide of 3 to 12 amino acids from the N-terminal of preflagellin, usually at Arg-Gly-|- or Lys-Gly-|-, to release flagellin.. Cleaves the N-terminal leader peptide from preflagellins. This chain is Preflagellin peptidase (flaK), found in Methanococcus maripaludis (strain C6 / ATCC BAA-1332).